Here is a 519-residue protein sequence, read N- to C-terminus: Putative cytochrome P450 CYP13A1 (519 aa).

Heme is bound at residue cysteine 465.

This sequence belongs to the cytochrome P450 family. Heme is required as a cofactor.

Its function is as follows. Cytochromes P450 are a group of heme-thiolate monooxygenases. They oxidize a variety of structurally unrelated compounds, including steroids, fatty acids, and xenobiotics. In Caenorhabditis elegans, this protein is Putative cytochrome P450 CYP13A1 (cyp-13A1).